Here is a 162-residue protein sequence, read N- to C-terminus: NADH-quinone oxidoreductase subunit I (162 aa).

4Fe-4S ferredoxin-type domains follow at residues 53-83 (LRRYPNGEERCIACKLCEAVCPAMAITIESE) and 93-122 (TRYDIDMIKCIFCGFCEEACPVDAIVETRV). The [4Fe-4S] cluster site is built by Cys-63, Cys-66, Cys-69, Cys-73, Cys-102, Cys-105, Cys-108, and Cys-112.

Belongs to the complex I 23 kDa subunit family. In terms of assembly, NDH-1 is composed of 14 different subunits. Subunits NuoA, H, J, K, L, M, N constitute the membrane sector of the complex. It depends on [4Fe-4S] cluster as a cofactor.

The protein resides in the cell inner membrane. The enzyme catalyses a quinone + NADH + 5 H(+)(in) = a quinol + NAD(+) + 4 H(+)(out). Its function is as follows. NDH-1 shuttles electrons from NADH, via FMN and iron-sulfur (Fe-S) centers, to quinones in the respiratory chain. The immediate electron acceptor for the enzyme in this species is believed to be ubiquinone. Couples the redox reaction to proton translocation (for every two electrons transferred, four hydrogen ions are translocated across the cytoplasmic membrane), and thus conserves the redox energy in a proton gradient. The chain is NADH-quinone oxidoreductase subunit I from Nitrosomonas europaea (strain ATCC 19718 / CIP 103999 / KCTC 2705 / NBRC 14298).